The sequence spans 404 residues: Cysteine desulfurase IscS (404 aa).

Pyridoxal 5'-phosphate contacts are provided by residues 75 to 76 (AT), N155, Q183, and 203 to 205 (SAH). K206 is subject to N6-(pyridoxal phosphate)lysine. T243 is a pyridoxal 5'-phosphate binding site. The active-site Cysteine persulfide intermediate is the C328. C328 contacts [2Fe-2S] cluster.

This sequence belongs to the class-V pyridoxal-phosphate-dependent aminotransferase family. NifS/IscS subfamily. Homodimer. Forms a heterotetramer with IscU, interacts with other sulfur acceptors. The cofactor is pyridoxal 5'-phosphate.

The protein localises to the cytoplasm. The catalysed reaction is (sulfur carrier)-H + L-cysteine = (sulfur carrier)-SH + L-alanine. It participates in cofactor biosynthesis; iron-sulfur cluster biosynthesis. Functionally, master enzyme that delivers sulfur to a number of partners involved in Fe-S cluster assembly, tRNA modification or cofactor biosynthesis. Catalyzes the removal of elemental sulfur atoms from cysteine to produce alanine. Functions as a sulfur delivery protein for Fe-S cluster synthesis onto IscU, an Fe-S scaffold assembly protein, as well as other S acceptor proteins. This Vibrio vulnificus (strain YJ016) protein is Cysteine desulfurase IscS.